A 621-amino-acid chain; its full sequence is Chaperone protein HtpG (621 aa).

The a; substrate-binding stretch occupies residues 1–328 (MIQEKKKFDA…SEDLPLNISR (328 aa)). The tract at residues 329–544 (ESLQHNSVLE…DAAMDIRMER (216 aa)) is b. The interval 475–494 (SDIDVEQTTSQSEAKNTDSK) is disordered. Residues 545-621 (FLIEQKQIAN…LNDIVQKAIL (77 aa)) are c.

The protein belongs to the heat shock protein 90 family. Homodimer.

It localises to the cytoplasm. Molecular chaperone. Has ATPase activity. This chain is Chaperone protein HtpG, found in Rickettsia rickettsii (strain Iowa).